Reading from the N-terminus, the 262-residue chain is Acyl-[acyl-carrier-protein]--UDP-N-acetylglucosamine O-acyltransferase (262 aa).

Belongs to the transferase hexapeptide repeat family. LpxA subfamily. In terms of assembly, homotrimer.

The protein localises to the cytoplasm. It catalyses the reaction a (3R)-hydroxyacyl-[ACP] + UDP-N-acetyl-alpha-D-glucosamine = a UDP-3-O-[(3R)-3-hydroxyacyl]-N-acetyl-alpha-D-glucosamine + holo-[ACP]. It participates in glycolipid biosynthesis; lipid IV(A) biosynthesis; lipid IV(A) from (3R)-3-hydroxytetradecanoyl-[acyl-carrier-protein] and UDP-N-acetyl-alpha-D-glucosamine: step 1/6. Involved in the biosynthesis of lipid A, a phosphorylated glycolipid that anchors the lipopolysaccharide to the outer membrane of the cell. In Salmonella schwarzengrund (strain CVM19633), this protein is Acyl-[acyl-carrier-protein]--UDP-N-acetylglucosamine O-acyltransferase.